Reading from the N-terminus, the 311-residue chain is p-hydroxybenzoic acid efflux pump subunit AaeA (311 aa).

Residues 11–31 (VGITVLVVVLAVIAIFNVWAF) traverse the membrane as a helical segment.

This sequence belongs to the membrane fusion protein (MFP) (TC 8.A.1) family.

The protein resides in the cell inner membrane. In terms of biological role, forms an efflux pump with AaeB. This is p-hydroxybenzoic acid efflux pump subunit AaeA from Yersinia pestis bv. Antiqua (strain Antiqua).